We begin with the raw amino-acid sequence, 377 residues long: Phospho-N-acetylmuramoyl-pentapeptide-transferase (377 aa).

The next 11 helical transmembrane spans lie at Tyr-9 to Gly-29, Thr-59 to Ala-79, Phe-85 to Tyr-105, Phe-122 to Ala-142, Trp-155 to Phe-175, Val-178 to Thr-198, Gly-210 to Val-230, Ala-247 to Phe-267, Val-274 to Ile-294, Ile-299 to Val-319, and Gln-354 to Leu-374.

It belongs to the glycosyltransferase 4 family. MraY subfamily. The cofactor is Mg(2+).

The protein localises to the cell inner membrane. The enzyme catalyses UDP-N-acetyl-alpha-D-muramoyl-L-alanyl-gamma-D-glutamyl-meso-2,6-diaminopimeloyl-D-alanyl-D-alanine + di-trans,octa-cis-undecaprenyl phosphate = di-trans,octa-cis-undecaprenyl diphospho-N-acetyl-alpha-D-muramoyl-L-alanyl-D-glutamyl-meso-2,6-diaminopimeloyl-D-alanyl-D-alanine + UMP. It functions in the pathway cell wall biogenesis; peptidoglycan biosynthesis. Its function is as follows. Catalyzes the initial step of the lipid cycle reactions in the biosynthesis of the cell wall peptidoglycan: transfers peptidoglycan precursor phospho-MurNAc-pentapeptide from UDP-MurNAc-pentapeptide onto the lipid carrier undecaprenyl phosphate, yielding undecaprenyl-pyrophosphoryl-MurNAc-pentapeptide, known as lipid I. In Bordetella bronchiseptica (strain ATCC BAA-588 / NCTC 13252 / RB50) (Alcaligenes bronchisepticus), this protein is Phospho-N-acetylmuramoyl-pentapeptide-transferase.